We begin with the raw amino-acid sequence, 994 residues long: MVVTKLATQRPKLPSVGRLGLVDPPAGERLAQLGWDRHEDQAHVDLLWSLSRAPDADAALRALIRLSENPDTGWDELNAALLRERSLRGRLFSVLGSSLALGDHLVAHPQSWKLLRGKVTLPSHDQLQRSFVECVEESEGMPGSLVHRLRTQYRDYVLMLAALDLAATVEDEPVLPFTVVAARLADAADAALAAALRVAEASVCGEHPPPRLAVIAMGKCGARELNYVSDVDVIFVAERSDPRNARVASEMMRVASAAFFEVDAALRPEGRNGELVRTLESHIAYYQRWAKTWEFQALLKARPVVGDAELGERYLTALMPMVWRACEREDFVVEVQAMRRRVEQLVPADVRGRELKLGSGGLRDVEFAVQLLQLVHARSDESLRVASTVDALAALGEGGYIGREDAANMTASYEFLRLLEHRLQLQRLKRTHLLPDPEDEEAVRWLARAAHIRPDGRNDAAGVLREELKKQNVRVSKLHTKLFYQPLLESIGPTGLEIAHGMTLEAAGRRLAALGYEGPQTALKHMSALVNQSGRRGRVQSVLLPRLLDWMSYAPDPDGGLLAYRRLSEALATESWYLATLRDKPAVAKRLMHVLGTSAYVPDLLMRAPRVIQQYEDGPAGPKLLETEPAAVARALIASASRYPDPERAIAGARTLRRRELARIGSADLLGLLEVSEVCRALTSVWVAVLQAALDVMIRASLPDDDRAPAAIAVIGMGRLGGAELGYGSDADVMFVCEPATGVDDARAVKWSTSIAERVRALLGTPSVDPPLELDANLRPEGRNGPLVRTLGSYAAYYEQWAQPWEIQALLRAHAVAGDAELGQRFLRMVDKTRYPPDGVSADSVREIRRIKARIESERLPRGADPNTHTKLGRGGLADIEWTVQLLQLQHAHQVPALHNTSTLQSLDVIAAADLVPAADVELLRQAWLTATRARNALVLVRGKPTDQLPGPGRQLNAVAVAAGWRNDDGGEFLDNYLRVTRRAKAVVRKVFGS.

Residues 1-487 (MVVTKLATQR…LHTKLFYQPL (487 aa)) form an adenylyl removase region. Residues 492–994 (GPTGLEIAHG…KAVVRKVFGS (503 aa)) form an adenylyl transferase region.

The protein belongs to the GlnE family. The cofactor is Mg(2+).

The enzyme catalyses [glutamine synthetase]-O(4)-(5'-adenylyl)-L-tyrosine + phosphate = [glutamine synthetase]-L-tyrosine + ADP. It carries out the reaction [glutamine synthetase]-L-tyrosine + ATP = [glutamine synthetase]-O(4)-(5'-adenylyl)-L-tyrosine + diphosphate. In terms of biological role, involved in the regulation of glutamine synthetase GlnA, a key enzyme in the process to assimilate ammonia. When cellular nitrogen levels are high, the C-terminal adenylyl transferase (AT) inactivates GlnA by covalent transfer of an adenylyl group from ATP to specific tyrosine residue of GlnA, thus reducing its activity. Conversely, when nitrogen levels are low, the N-terminal adenylyl removase (AR) activates GlnA by removing the adenylyl group by phosphorolysis, increasing its activity. The regulatory region of GlnE binds the signal transduction protein PII (GlnB) which indicates the nitrogen status of the cell. The sequence is that of Bifunctional glutamine synthetase adenylyltransferase/adenylyl-removing enzyme from Mycobacterium tuberculosis (strain CDC 1551 / Oshkosh).